Reading from the N-terminus, the 191-residue chain is MLAIGITGSYASGKTFILNYLSEKGYKTFCADNCIKELYKDIVLQTQILKLLPELKYFNIRKISNLIYNDDIAREKLQNFIYPLLIDKLILFKKENTNYKFVFSEIPLLYEAKFDQYFDFVVTIYCSEEIRMQRAITRASFDINIYNKIKEIQLSQDSKIAKADFAINSGVDMLDLEKQITKLIKNLECQV.

The region spanning 3 to 191 (AIGITGSYAS…KLIKNLECQV (189 aa)) is the DPCK domain. Residue 11-16 (ASGKTF) coordinates ATP.

Belongs to the CoaE family.

It localises to the cytoplasm. It catalyses the reaction 3'-dephospho-CoA + ATP = ADP + CoA + H(+). The protein operates within cofactor biosynthesis; coenzyme A biosynthesis; CoA from (R)-pantothenate: step 5/5. Its function is as follows. Catalyzes the phosphorylation of the 3'-hydroxyl group of dephosphocoenzyme A to form coenzyme A. This chain is Dephospho-CoA kinase, found in Rickettsia typhi (strain ATCC VR-144 / Wilmington).